A 448-amino-acid chain; its full sequence is Maltoporin (448 aa).

Positions 1–25 (MMITLRKLPLAVAVMAGIFAAQASA) are cleaved as a signal peptide.

The protein belongs to the porin LamB (TC 1.B.3) family. Homotrimer formed of three 18-stranded antiparallel beta-barrels, containing three independent channels.

The protein resides in the cell outer membrane. The enzyme catalyses beta-maltose(in) = beta-maltose(out). Involved in the transport of maltose and maltodextrins. In Cronobacter sakazakii (strain ATCC BAA-894) (Enterobacter sakazakii), this protein is Maltoporin.